A 176-amino-acid chain; its full sequence is ATP synthase subunit delta (176 aa).

The protein belongs to the ATPase delta chain family. As to quaternary structure, F-type ATPases have 2 components, F(1) - the catalytic core - and F(0) - the membrane proton channel. F(1) has five subunits: alpha(3), beta(3), gamma(1), delta(1), epsilon(1). F(0) has three main subunits: a(1), b(2) and c(10-14). The alpha and beta chains form an alternating ring which encloses part of the gamma chain. F(1) is attached to F(0) by a central stalk formed by the gamma and epsilon chains, while a peripheral stalk is formed by the delta and b chains.

It localises to the cell inner membrane. In terms of biological role, f(1)F(0) ATP synthase produces ATP from ADP in the presence of a proton or sodium gradient. F-type ATPases consist of two structural domains, F(1) containing the extramembraneous catalytic core and F(0) containing the membrane proton channel, linked together by a central stalk and a peripheral stalk. During catalysis, ATP synthesis in the catalytic domain of F(1) is coupled via a rotary mechanism of the central stalk subunits to proton translocation. Functionally, this protein is part of the stalk that links CF(0) to CF(1). It either transmits conformational changes from CF(0) to CF(1) or is implicated in proton conduction. This chain is ATP synthase subunit delta, found in Polaromonas sp. (strain JS666 / ATCC BAA-500).